Reading from the N-terminus, the 458-residue chain is Delta(8)-fatty-acid desaturase (458 aa).

The 85-residue stretch at 16–100 (KKYITSKELK…LKDYQVSDIS (85 aa)) folds into the Cytochrome b5 heme-binding domain. Positions 51 and 74 each coordinate heme. Helical transmembrane passes span 122-142 (GVIY…YGVL) and 147-167 (FWIH…IAYL). Residues 169-173 (HDAGH) carry the Histidine box-1 motif. A helical membrane pass occupies residues 185 to 205 (FAGIFIGNCITGISIAWWKWT). The Histidine box-2 signature appears at 206–210 (HNAHH). A run of 3 helical transmembrane segments spans residues 264-284 (YYPI…LLLI), 293-313 (GLNI…VSRL), and 320-340 (VAFV…FTLN). Residues 383-387 (QLEHH) carry the Histidine box-3 motif.

The protein belongs to the fatty acid desaturase type 1 family. Fe cation is required as a cofactor.

It localises to the membrane. The enzyme catalyses an N-acyl-(4R)-4-hydroxysphinganine + 2 Fe(II)-[cytochrome b5] + O2 + 2 H(+) = a (4R,8E)-4-hydroxysphingenine ceramide + 2 Fe(III)-[cytochrome b5] + 2 H2O. The catalysed reaction is an N-acyl-(4R)-4-hydroxysphinganine + 2 Fe(II)-[cytochrome b5] + O2 + 2 H(+) = a (4R,8Z)-4-hydroxysphing-8-enine ceramide + 2 Fe(III)-[cytochrome b5] + 2 H2O. Functionally, plays a major role as delta(8)-fatty-acid desaturase which introduces a double bond at the 8-position in the long-chain base (LCB) of ceramides with or without a hydroxy group at the 4-position. The enzyme produces both the 8E and 8Z isomers. This structural modification contributes to the quantitative partitioning of ceramides between the two major sphingolipid classes, glucosylceramides and glycosylinositolphosphoryl ceramides. Sphingolipids are important membrane components involved in environmental stress responses, such as resistance to chilling, and act as cell signaling molecules. The protein is Delta(8)-fatty-acid desaturase (sld1) of Helianthus annuus (Common sunflower).